Consider the following 294-residue polypeptide: Agamous-like MADS-box protein AGL82 (294 aa).

In terms of domain architecture, MADS-box spans 1-51; that stretch reads MVPKVVDLQRIANDKTRITTYKKRKASLYKKAQEFSTLCGVETCLIVYGPT.

As to quaternary structure, interacts with MEE14/CBP1.

It is found in the nucleus. Functionally, probable transcription factor that may function in the maintenance of the proper function of the central cell in pollen tube attraction. The polypeptide is Agamous-like MADS-box protein AGL82 (Arabidopsis thaliana (Mouse-ear cress)).